Reading from the N-terminus, the 413-residue chain is Putative competence-damage inducible protein (413 aa).

The protein belongs to the CinA family.

The polypeptide is Putative competence-damage inducible protein (Desulforudis audaxviator (strain MP104C)).